The primary structure comprises 635 residues: 1-deoxy-D-xylulose-5-phosphate synthase (635 aa).

Thiamine diphosphate-binding positions include histidine 72 and 113-115 (GHA). Aspartate 144 contacts Mg(2+). Thiamine diphosphate-binding positions include 145-146 (GA), asparagine 174, tyrosine 286, and glutamate 369. Asparagine 174 contacts Mg(2+).

Belongs to the transketolase family. DXPS subfamily. In terms of assembly, homodimer. The cofactor is Mg(2+). It depends on thiamine diphosphate as a cofactor.

It carries out the reaction D-glyceraldehyde 3-phosphate + pyruvate + H(+) = 1-deoxy-D-xylulose 5-phosphate + CO2. It functions in the pathway metabolic intermediate biosynthesis; 1-deoxy-D-xylulose 5-phosphate biosynthesis; 1-deoxy-D-xylulose 5-phosphate from D-glyceraldehyde 3-phosphate and pyruvate: step 1/1. In terms of biological role, catalyzes the acyloin condensation reaction between C atoms 2 and 3 of pyruvate and glyceraldehyde 3-phosphate to yield 1-deoxy-D-xylulose-5-phosphate (DXP). The sequence is that of 1-deoxy-D-xylulose-5-phosphate synthase from Acaryochloris marina (strain MBIC 11017).